A 287-amino-acid chain; its full sequence is Protease HtpX (287 aa).

The next 2 membrane-spanning stretches (helical) occupy residues I4 to I24 and G33 to I53. H139 provides a ligand contact to Zn(2+). The active site involves E140. Residue H143 coordinates Zn(2+). Helical transmembrane passes span L154 to I174 and A195 to F215. Residue E220 coordinates Zn(2+).

It belongs to the peptidase M48B family. The cofactor is Zn(2+).

The protein localises to the cell inner membrane. This is Protease HtpX from Shewanella putrefaciens (strain CN-32 / ATCC BAA-453).